The sequence spans 715 residues: DNA ligase (715 aa).

Residues 47 to 51 (DADYD), 96 to 97 (SL), and Glu-128 each bind NAD(+). Lys-130 acts as the N6-AMP-lysine intermediate in catalysis. Positions 151, 188, 306, and 330 each coordinate NAD(+). Zn(2+) contacts are provided by Cys-435, Cys-438, Cys-453, and Cys-459. The BRCT domain occupies 637–715 (RRDTAVAGKT…EDEWLALIGN (79 aa)).

Belongs to the NAD-dependent DNA ligase family. LigA subfamily. Mg(2+) serves as cofactor. Requires Mn(2+) as cofactor.

The catalysed reaction is NAD(+) + (deoxyribonucleotide)n-3'-hydroxyl + 5'-phospho-(deoxyribonucleotide)m = (deoxyribonucleotide)n+m + AMP + beta-nicotinamide D-nucleotide.. In terms of biological role, DNA ligase that catalyzes the formation of phosphodiester linkages between 5'-phosphoryl and 3'-hydroxyl groups in double-stranded DNA using NAD as a coenzyme and as the energy source for the reaction. It is essential for DNA replication and repair of damaged DNA. This chain is DNA ligase, found in Rhodopseudomonas palustris (strain TIE-1).